The chain runs to 303 residues: MSDNILVLGAGELGTAILEALAKHPSRANAKLSVLLRPSSINSTAPEKKKQIEHLQGLGITPQPGDVESSTSELAAIFRNYDTIISCNGMGRPFGTQTKLADAVFEAGVKRYFPWQFGMDYDAIGTGSDQDRFDEQINIRKKLRAQNKTEWTIVSTGLFMSFLFLTDFGVINLEQKVTRGLGTWDTKITVTVPRDIGRVTADIVFDPRGIANEVVHIAGDTLSYKEIADLVDERFGEGTFRRELWDMETLKKQLAEGRPVAEYKATFAVGKGVAWDREGTVNMARGIQMTGLREYLKDVNLVK.

NADP(+) is bound by residues 8 to 13 (LGAGEL), 8 to 14 (LGAGELG), 36 to 39 (LRPS), Arg37, 56 to 57 (QG), 77 to 79 (IFR), and 159 to 162 (FMSF).

This sequence belongs to the NmrA-type oxidoreductase family.

NmrA-like family domain-containing oxidoreductase; part of the Fusarium detoxification of benzoxazolinone cluster 1 (FDB1) involved in the degradation of benzoxazolinones produced by the host plant. Maize, wheat, and rye produce the 2 benzoxazinone phytoanticipins 2,4-dihy-droxy-7-methoxy-1,4-benzoxazin-3-one (DIMBOA) and 2,4-dihydroxy-1,4-benzoxazin-3-one (DIBOA) that, due to their inherent instability once released, spontaneously degrade to the more stable corresponding benzoxazolinones, 6-methoxy-2-benzoxazolinone (MBOA) and 2-benzoxazolinone (BOA), respectively. The first step in the detoxification of benzoxazolinones involves the hydrolysis of the cyclic ester bond of benzoxazolinones by the FDB1 cluster gamma-lactamase MBL1 to aminophenols. MBL1 is able to convert BOA into 2-aminophenol (2-AP), as well as MBOA into 5-methoxy-2-aminophenol (2-AMP). The FDB2 cluster N-malonyltransferase FDB2/NAT1 then metabolizes aminophenols via N-malonylation to non-toxic malonamic acids. FDB2/NAT1 converts 2-AP into N-(2-hydroxyphenyl) malonamic acid (HPMA) and 2-AMP into N-(2-hydroxy-4-methoxyphenyl) malonamic acid (HMPMA). The duplicated dienlactone hydrolases DLH1 and DLH2 may provide redundant function for hydrolyzing the lactone moiety in the BOA molecule. The roles of the amidases an other enzymes encoded by the 2 FDB clusters have not been identified so far. The protein is NmrA-like family domain-containing oxidoreductase FVEG_08287 of Gibberella moniliformis (strain M3125 / FGSC 7600) (Maize ear and stalk rot fungus).